We begin with the raw amino-acid sequence, 146 residues long: Large ribosomal subunit protein uL15 (146 aa).

A compositionally biased stretch (basic and acidic residues) spans 1–13 (MKLHELKPAEGSR). The segment at 1-65 (MKLHELKPAE…PLYRRLPKRG (65 aa)) is disordered. 2 stretches are compositionally biased toward gly residues: residues 21–31 (RGIGSGNGKTA) and 42–52 (SGGGVRPGFEG).

The protein belongs to the universal ribosomal protein uL15 family. Part of the 50S ribosomal subunit.

Its function is as follows. Binds to the 23S rRNA. This is Large ribosomal subunit protein uL15 from Halalkalibacterium halodurans (strain ATCC BAA-125 / DSM 18197 / FERM 7344 / JCM 9153 / C-125) (Bacillus halodurans).